Reading from the N-terminus, the 380-residue chain is Cytochrome b (380 aa).

4 consecutive transmembrane segments (helical) span residues 34-54, 78-100, 113-133, and 179-199; these read FGSLLGLFLTMQIITGIILAM, WLMRTMHMNGAAFMFICMYAHMG, TWNIGIIIMIATMATAFMGYV, and FFAFHFVLPFVLIALSGVHLL. Residues H84 and H98 each contribute to the heme b site. Heme b is bound by residues H183 and H197. H202 is an a ubiquinone binding site. 4 consecutive transmembrane segments (helical) span residues 225–245, 289–309, 324–344, and 349–369; these read FSWKDLLGFAXMILIFCTITL, LGGVVALVGSLIIPATMMLTH, VIFWLFCANFIALSWIGAAPV, and ITLGQVFSMLYFLFFLTAPMI.

This sequence belongs to the cytochrome b family. As to quaternary structure, the main subunits of complex b-c1 are: cytochrome b, cytochrome c1 and the Rieske protein. The cofactor is heme b.

It is found in the mitochondrion inner membrane. Its function is as follows. Component of the ubiquinol-cytochrome c reductase complex (complex III or cytochrome b-c1 complex) that is part of the mitochondrial respiratory chain. The b-c1 complex mediates electron transfer from ubiquinol to cytochrome c. Contributes to the generation of a proton gradient across the mitochondrial membrane that is then used for ATP synthesis. In Xenoturbella bocki (Marine worm), this protein is Cytochrome b (mt:Cyt-b).